A 110-amino-acid chain; its full sequence is Small ribosomal subunit protein bS16 (110 aa).

The interval 79–110 (AAGVKKREARNNPQKAVPRKERKAQAEAAAKG) is disordered.

This sequence belongs to the bacterial ribosomal protein bS16 family.

The sequence is that of Small ribosomal subunit protein bS16 from Bradyrhizobium diazoefficiens (strain JCM 10833 / BCRC 13528 / IAM 13628 / NBRC 14792 / USDA 110).